We begin with the raw amino-acid sequence, 350 residues long: MIKLCTFLSLFLIFFFLNLNAINGSGNTGEVVQGTISVDSISKGMDSDESMLYEKNEYDNYQIPNICFDNTGIHQPRFIEDNKEYLYNKIGEISNSFSTNLNNYTTFMHELYGLYNDHIDVSMDNFRYGYIFMQVNFSKHKNKDSTAKLVVNLYGSVNKTHSAGIELAQGSFEVYLNQCDLAQNKINATITDSIFVMHDNTPAKEDHVTSTHDNTNLKNEDSLNKLNDLTKIHSSLMENNIDNTEHFITVDKISECIFQVNKLEDFLNNCMTLTNNNGPNSNENDDALKKHKSQMQKKIYRETLFSNFKESIVNKDMEGCKKNYTLLMSNSIASKLMSVFVFIAVIIYIL.

The first 24 residues, 1 to 24 (MIKLCTFLSLFLIFFFLNLNAING), serve as a signal peptide directing secretion. The chain crosses the membrane as a helical span at residues 330–350 (NSIASKLMSVFVFIAVIIYIL).

Forms multimers, perhaps with an unknown protein(s).

The protein localises to the membrane. In terms of biological role, involved in ookinete evasion of the mosquito complement-like response, oocyst maturation, sporozoite development and infectivity. This is Ookinete surface protein PIMMS43 from Plasmodium berghei (strain Anka).